The primary structure comprises 351 residues: Cell cycle control protein 50B (351 aa).

At 1–33 (MTWSATARGAHQPDNTAFTQQRLPAWQPLLSAS) the chain is on the cytoplasmic side. A helical membrane pass occupies residues 34–54 (IALPLFFCAGLAFIGLGLGLY). Topologically, residues 55–315 (YSSNGIKELE…SISWMGGKNP (261 aa)) are exoplasmic loop. 3 N-linked (GlcNAc...) asparagine glycosylation sites follow: Asn75, Asn213, and Asn286. The helical transmembrane segment at 316-336 (FLGIAYLVVGSLCILTGFVML) threads the bilayer. At 337–351 (VVYIRYQDQDDDDEE) the chain is on the cytoplasmic side.

Belongs to the CDC50/LEM3 family. Component of a P4-ATPase flippase complex which consists of a catalytic alpha subunit and an accessory beta subunit. Interacts with alpha subunits ATP8A1, ATP8B1, ATP8B2 and ATP8B4.

It localises to the cell membrane. Its function is as follows. Accessory component of a P4-ATPase flippase complex which catalyzes the hydrolysis of ATP coupled to the transport of aminophospholipids from the outer to the inner leaflet of various membranes and ensures the maintenance of asymmetric distribution of phospholipids. Phospholipid translocation also seems to be implicated in vesicle formation and in uptake of lipid signaling molecules. The beta subunit may assist in binding of the phospholipid substrate. Can mediate the export of alpha subunits ATP8A1, ATP8B1, ATP8B2 and ATP8B4 from the ER to the plasma membrane. The protein is Cell cycle control protein 50B (TMEM30B) of Homo sapiens (Human).